A 123-amino-acid polypeptide reads, in one-letter code: Loki profilin-3 (123 aa).

It belongs to the Asgard profilin family.

The protein resides in the cytoplasm. It localises to the cytoskeleton. Its function is as follows. Binds to actin and affects the structure of the cytoskeleton. At high concentrations inhibits spontaneous rabbit actin nucleation. This strongly suggests this archaea has a profilin-regulated actin system, and actin-type genes can be identified in this organism. In Lokiarchaeum sp. (strain GC14_75), this protein is Loki profilin-3.